Reading from the N-terminus, the 213-residue chain is uncharacterized protein (213 aa).

Residues 1 to 21 form the signal peptide; it reads MKKILFLTVICFCLSSIKAYA.

This is an uncharacterized protein from Rickettsia prowazekii (strain Madrid E).